The chain runs to 302 residues: Cell division protein FtsQ (302 aa).

Residues 1-41 (MPAVVRGGPPKPRRPRAEAPASPSKGKPAPRKAQPAAKLHA) are disordered. The Cytoplasmic segment spans residues 1–50 (MPAVVRGGPPKPRRPRAEAPASPSKGKPAPRKAQPAAKLHAARGVGLSPT). Residues 18–38 (EAPASPSKGKPAPRKAQPAAK) are compositionally biased toward low complexity. A helical transmembrane segment spans residues 51–71 (VALSVAGAALGLGLVVMLATG). Topologically, residues 72–302 (HRAERLGASM…LPGQPAADGA (231 aa)) are periplasmic. Residues 94 to 162 (FRLKTVHIRG…DTVLIAVEER (69 aa)) enclose the POTRA domain.

This sequence belongs to the FtsQ/DivIB family. FtsQ subfamily.

It localises to the cell inner membrane. Functionally, essential cell division protein. The polypeptide is Cell division protein FtsQ (Caulobacter vibrioides (strain ATCC 19089 / CIP 103742 / CB 15) (Caulobacter crescentus)).